A 364-amino-acid polypeptide reads, in one-letter code: Mannitol-1-phosphate 5-dehydrogenase (364 aa).

6-17 (VLHFGAGNIGRG) contributes to the NAD(+) binding site.

This sequence belongs to the mannitol dehydrogenase family.

The catalysed reaction is D-mannitol 1-phosphate + NAD(+) = beta-D-fructose 6-phosphate + NADH + H(+). In Mycoplasma pneumoniae (strain ATCC 29342 / M129 / Subtype 1) (Mycoplasmoides pneumoniae), this protein is Mannitol-1-phosphate 5-dehydrogenase (mtlD).